Reading from the N-terminus, the 379-residue chain is Chaperone protein DnaJ (379 aa).

The J domain occupies 5-69; sequence EYYERLGVDK…QKRAAYDQYG (65 aa). The CR-type zinc finger occupies 141-223; the sequence is GVEKQVKYNR…CHGSGHEKVA (83 aa). Zn(2+) contacts are provided by cysteine 154, cysteine 157, cysteine 171, cysteine 174, cysteine 197, cysteine 200, and cysteine 214. CXXCXGXG motif repeat units follow at residues 154 to 161, 171 to 178, 197 to 204, and 211 to 218; these read CHTCGGSG, CHKCGGRG, CDVCHGTG, and STTCHGSG.

This sequence belongs to the DnaJ family. In terms of assembly, homodimer. Requires Zn(2+) as cofactor.

Its subcellular location is the cytoplasm. In terms of biological role, participates actively in the response to hyperosmotic and heat shock by preventing the aggregation of stress-denatured proteins and by disaggregating proteins, also in an autonomous, DnaK-independent fashion. Unfolded proteins bind initially to DnaJ; upon interaction with the DnaJ-bound protein, DnaK hydrolyzes its bound ATP, resulting in the formation of a stable complex. GrpE releases ADP from DnaK; ATP binding to DnaK triggers the release of the substrate protein, thus completing the reaction cycle. Several rounds of ATP-dependent interactions between DnaJ, DnaK and GrpE are required for fully efficient folding. Also involved, together with DnaK and GrpE, in the DNA replication of plasmids through activation of initiation proteins. The polypeptide is Chaperone protein DnaJ (Lactococcus lactis subsp. cremoris (Streptococcus cremoris)).